Here is a 268-residue protein sequence, read N- to C-terminus: Cytochrome b-c1 complex subunit Rieske-3, mitochondrial (268 aa).

A mitochondrion-targeting transit peptide spans 1–56 (MLRIAGRKLSSSAATRSSSAFFTRNPFTFTDDSSSPARSPSPASLASQFLDQFRGF). Topologically, residues 57–105 (SSNSVSPAHQTGLVSDLPATVAAIKNPSSKIVYDDSNHERYPPGDPSKR) are mitochondrial matrix. The helical transmembrane segment at 106–128 (AFAYFVLTGGRFVYASLVRLLIL) threads the bilayer. Residues 129 to 268 (KFVLSMSASK…FMEENKLLIG (140 aa)) lie on the Mitochondrial intermembrane side of the membrane. In terms of domain architecture, Rieske spans 178 to 266 (INLANSVDLG…YSFMEENKLL (89 aa)). 4 residues coordinate [2Fe-2S] cluster: Cys-211, His-213, Cys-230, and His-233. A disulfide bond links Cys-216 and Cys-232.

It belongs to the Rieske iron-sulfur protein family. As to quaternary structure, component of the ubiquinol-cytochrome c oxidoreductase (cytochrome b-c1 complex, complex III, CIII), a multisubunit enzyme composed of 3 respiratory subunits cytochrome b, cytochrome c1 and Rieske protein, 2 core protein subunits, and several low-molecular weight protein subunits. The complex exists as an obligatory dimer and forms supercomplexes (SCs) in the inner mitochondrial membrane with cytochrome c oxidase (complex IV, CIV). [2Fe-2S] cluster is required as a cofactor. In terms of tissue distribution, high levels are seen in the flowers while a low level expression is seen in the roots, leaves and stems.

The protein localises to the mitochondrion inner membrane. The enzyme catalyses a quinol + 2 Fe(III)-[cytochrome c](out) = a quinone + 2 Fe(II)-[cytochrome c](out) + 2 H(+)(out). Its function is as follows. Component of the ubiquinol-cytochrome c oxidoreductase, a multisubunit transmembrane complex that is part of the mitochondrial electron transport chain which drives oxidative phosphorylation. The respiratory chain contains 3 multisubunit complexes succinate dehydrogenase (complex II, CII), ubiquinol-cytochrome c oxidoreductase (cytochrome b-c1 complex, complex III, CIII) and cytochrome c oxidase (complex IV, CIV), that cooperate to transfer electrons derived from NADH and succinate to molecular oxygen, creating an electrochemical gradient over the inner membrane that drives transmembrane transport and the ATP synthase. The cytochrome b-c1 complex catalyzes electron transfer from ubiquinol to cytochrome c, linking this redox reaction to translocation of protons across the mitochondrial inner membrane, with protons being carried across the membrane as hydrogens on the quinol. In the process called Q cycle, 2 protons are consumed from the matrix, 4 protons are released into the intermembrane space and 2 electrons are passed to cytochrome c. The Rieske protein is a catalytic core subunit containing a [2Fe-2S] iron-sulfur cluster. It cycles between 2 conformational states during catalysis to transfer electrons from the quinol bound in the Q(0) site in cytochrome b to cytochrome c1. The chain is Cytochrome b-c1 complex subunit Rieske-3, mitochondrial from Nicotiana tabacum (Common tobacco).